Reading from the N-terminus, the 182-residue chain is Plasmolipin (182 aa).

The Cytoplasmic segment spans residues 1–35 (MAEFPSKVSTRTSSPAQGAEASVSALRPDLGFVRS). A Phosphoserine modification is found at Ser-9. Positions 32 to 166 (FVRSRLGALM…SAFFSYQAWR (135 aa)) constitute an MARVEL domain. A helical transmembrane segment spans residues 36 to 56 (RLGALMLLQLVLGLLVWALIA). Residues 57–68 (DTPYHLYPAYGW) lie on the Extracellular side of the membrane. The chain crosses the membrane as a helical span at residues 69–89 (VMFVAVFLWLVTIVLFNLYLF). Over 90–99 (QLHMKLYMVP) the chain is Cytoplasmic. A helical membrane pass occupies residues 100-120 (WPLVLMIFNISATVLYITAFI). Residues 121–141 (ACSAAVDLTSLRGTRPYNQRA) are Extracellular-facing. The helical transmembrane segment at 142–162 (AASFFACLVMIAYGVSAFFSY) threads the bilayer. Topologically, residues 163–182 (QAWRGVGSNAATSQMAGGYA) are cytoplasmic.

It belongs to the MAL family. In terms of assembly, forms oligomers. In terms of processing, phosphorylated.

The protein resides in the cell membrane. It localises to the myelin membrane. The protein localises to the apical cell membrane. It is found in the golgi apparatus. Main component of the myelin sheath that plays an important role in myelin membrane biogenesis and myelination. Plays an essential function in apical endocytosis. Regulates epithelial development through the regulation of apical endocytosis. Part of the intracellular machinery that mediates basolateral-to-apical transport of ICAM-1, an essential adhesion receptor in epithelial cells, from the subapical compartment in hepatic epithelial cells. The sequence is that of Plasmolipin from Homo sapiens (Human).